A 223-amino-acid chain; its full sequence is MQWAAGRRWAWITLFLTIVAVLIQAVWLWLGTQSFVFQREEIAQLARQYAGLDHELAFSRLIVELRRLHPGHVLPDEELQWVFVNAGGWMGAMCLLHASLSEYVLLFGTALGSHGHSGRYWAEISDTIISGTFHQWREGTTKSEVYYPGETVVHGPGEATAVEWGPNTWMVEYGRGVIPSTLAFALSDTIFSTQDFLTLFYTLRAYARGLRLELTTYLFGQDS.

Over 1-9 (MQWAAGRRW) the chain is Lumenal. A targeting to endoplasmic reticulum-associated lipid droplets region spans residues 2–8 (QWAAGRR). A helical membrane pass occupies residues 10–30 (AWITLFLTIVAVLIQAVWLWL). Residues 31 to 223 (GTQSFVFQRE…LTTYLFGQDS (193 aa)) lie on the Cytoplasmic side of the membrane. Positions 99–106 (SLSEYVLL) are important for ligand-binding. The interval 177–223 (VIPSTLAFALSDTIFSTQDFLTLFYTLRAYARGLRLELTTYLFGQDS) is C-terminal hydrophobic region.

The protein belongs to the ERG2 family. In terms of assembly, homotrimer. Forms a ternary complex with ANK2 and ITPR3. The complex is disrupted by agonists. Interacts with KCNA4. Interacts with KCNA2; cocaine consumption leads to increased interaction. Interacts with RNF112 in an oxidative stress-regulated manner.

The protein resides in the nucleus inner membrane. It is found in the nucleus outer membrane. It localises to the nucleus envelope. Its subcellular location is the cytoplasmic vesicle. The protein localises to the endoplasmic reticulum membrane. The protein resides in the membrane. It is found in the lipid droplet. It localises to the cell junction. Its subcellular location is the cell membrane. The protein localises to the cell projection. The protein resides in the growth cone. It is found in the postsynaptic density membrane. Functions in lipid transport from the endoplasmic reticulum and is involved in a wide array of cellular functions probably through regulation of the biogenesis of lipid microdomains at the plasma membrane. Involved in the regulation of different receptors it plays a role in BDNF signaling and EGF signaling. Also regulates ion channels like the potassium channel and could modulate neurotransmitter release. Plays a role in calcium signaling through modulation together with ANK2 of the ITP3R-dependent calcium efflux at the endoplasmic reticulum. Plays a role in several other cell functions including proliferation, survival and death. Originally identified for its ability to bind various psychoactive drugs it is involved in learning processes, memory and mood alteration. Necessary for proper mitochondrial axonal transport in motor neurons, in particular the retrograde movement of mitochondria. Plays a role in protecting cells against oxidative stress-induced cell death via its interaction with RNF112. This is Sigma non-opioid intracellular receptor 1 (SIGMAR1) from Trichosurus vulpecula (Brush-tailed possum).